The sequence spans 475 residues: Ribulose bisphosphate carboxylase large chain (475 aa).

Positions 1–2 (MA) are excised as a propeptide. At P3 the chain carries N-acetylproline. Position 14 is an N6,N6,N6-trimethyllysine (K14). Substrate-binding residues include N123 and T173. Residue K175 is the Proton acceptor of the active site. Substrate is bound at residue K177. Mg(2+) is bound by residues K201, D203, and E204. Residue K201 is modified to N6-carboxylysine. The active-site Proton acceptor is H294. The substrate site is built by R295, H327, and S379.

Belongs to the RuBisCO large chain family. Type I subfamily. Heterohexadecamer of 8 large chains and 8 small chains. The cofactor is Mg(2+).

The protein resides in the plastid. The protein localises to the chloroplast. It carries out the reaction 2 (2R)-3-phosphoglycerate + 2 H(+) = D-ribulose 1,5-bisphosphate + CO2 + H2O. The enzyme catalyses D-ribulose 1,5-bisphosphate + O2 = 2-phosphoglycolate + (2R)-3-phosphoglycerate + 2 H(+). Its function is as follows. RuBisCO catalyzes two reactions: the carboxylation of D-ribulose 1,5-bisphosphate, the primary event in carbon dioxide fixation, as well as the oxidative fragmentation of the pentose substrate in the photorespiration process. Both reactions occur simultaneously and in competition at the same active site. In Nephroselmis olivacea (Green alga), this protein is Ribulose bisphosphate carboxylase large chain.